The chain runs to 185 residues: Elongation factor P (185 aa).

It belongs to the elongation factor P family.

It is found in the cytoplasm. Its pathway is protein biosynthesis; polypeptide chain elongation. Functionally, involved in peptide bond synthesis. Stimulates efficient translation and peptide-bond synthesis on native or reconstituted 70S ribosomes in vitro. Probably functions indirectly by altering the affinity of the ribosome for aminoacyl-tRNA, thus increasing their reactivity as acceptors for peptidyl transferase. This chain is Elongation factor P, found in Carboxydothermus hydrogenoformans (strain ATCC BAA-161 / DSM 6008 / Z-2901).